Reading from the N-terminus, the 666-residue chain is Mitogen-activated protein kinase kinase kinase ANP1 (666 aa).

The Protein kinase domain maps to 69–331; sequence WRKGQLIGRG…ASELLKHPFV (263 aa). ATP contacts are provided by residues 75–83 and Lys98; that span reads IGRGAFGTV. A coiled-coil region spans residues 101 to 131; it reads LIAANFASKEKTQAHIQELEEEVKLLKNLSH. Glycyl lysine isopeptide (Lys-Gly) (interchain with G-Cter in ubiquitin) cross-links involve residues Lys109 and Lys111. Asp197 functions as the Proton acceptor in the catalytic mechanism. A compositionally biased stretch (basic and acidic residues) spans 452-464; it reads KFDESPGNGEKES. 3 disordered regions span residues 452–481, 536–592, and 635–666; these read KFDE…DDDE, GFLK…DGVS, and QEIM…SPGK. Residues 538–558 show a composition bias toward low complexity; that stretch reads LKLPPKSRSPSRGPLGGSPSR. Over residues 560-569 the composition is skewed to polar residues; the sequence is TDATSCSKSP. Positions 620 to 643 form a coiled coil; the sequence is KKWKEELDQELERKRQEIMRQAGL. The segment covering 647–660 has biased composition (basic and acidic residues); that stretch reads PRDRGMSRQREKSR.

This sequence belongs to the protein kinase superfamily. STE Ser/Thr protein kinase family. MAP kinase kinase kinase subfamily. In terms of tissue distribution, expressed in roots, inflorescence stems, flower buds and flowers. Low amount in rosette and cauline leaves.

It carries out the reaction L-seryl-[protein] + ATP = O-phospho-L-seryl-[protein] + ADP + H(+). The catalysed reaction is L-threonyl-[protein] + ATP = O-phospho-L-threonyl-[protein] + ADP + H(+). In terms of biological role, may be involved in an oxidative stress-mediated signaling cascade that phosphorylates downstream MAP kinases MPK3 and MPK6. May suppress auxin signaling that promotes cell cycle. Functionally redundant to ANP2 and ANP3 in the positive regulation of cytokinesis. This is Mitogen-activated protein kinase kinase kinase ANP1 (ANP1) from Arabidopsis thaliana (Mouse-ear cress).